Here is a 610-residue protein sequence, read N- to C-terminus: UvrABC system protein C (610 aa).

Residues 16–94 enclose the GIY-YIG domain; the sequence is SQPGVYRMYD…IKLYQPRYNV (79 aa). The UVR domain occupies 204–239; sequence DQVLTQLIARMEKASQDLAFEEAARIRDQIQAVRRV.

Belongs to the UvrC family. As to quaternary structure, interacts with UvrB in an incision complex.

It localises to the cytoplasm. Its function is as follows. The UvrABC repair system catalyzes the recognition and processing of DNA lesions. UvrC both incises the 5' and 3' sides of the lesion. The N-terminal half is responsible for the 3' incision and the C-terminal half is responsible for the 5' incision. The sequence is that of UvrABC system protein C from Salmonella gallinarum (strain 287/91 / NCTC 13346).